The chain runs to 98 residues: Small ribosomal subunit protein bS6 (98 aa).

It belongs to the bacterial ribosomal protein bS6 family.

Functionally, binds together with bS18 to 16S ribosomal RNA. This is Small ribosomal subunit protein bS6 from Staphylococcus aureus (strain NCTC 8325 / PS 47).